A 438-amino-acid polypeptide reads, in one-letter code: Protein SPMIP7 (438 aa).

In terms of tissue distribution, testis-specific.

Functionally, essential for normal spermatogenesis. The sequence is that of Protein SPMIP7 from Homo sapiens (Human).